The primary structure comprises 318 residues: MKIGKRILLGLVAVCALFLGIIYLWGYKFNIYLVPPSPQKYVRVALKNMDELGLFTDSKEWVETKKKTIEETSNAKNYAETIPFLQKAIKVAGGKHSFIEHEEDISKRSMTKYIKPKAEIEGNTLILTIPEFTGNDSQASDYANFLESSLHKNNYNGVIVDLRGNRGGDLSPMVLGLSPLLPDGTLFTYVDKSSHSKPVELQNGEINSGGSSTKISDNKKIKKAPIAVLIDNNTGSSGELTALCFEGIPNVKFLGSDSAGYTSANQTVYLYDGSTLQITSAFVKDRTNNIYKNFPISPDIQTNNAKSSAIEWIKSQIK.

Residues 7-28 traverse the membrane as a helical segment; it reads ILLGLVAVCALFLGIIYLWGYK.

The protein localises to the cell membrane. This chain is Nisin-resistance protein (nsr), found in Lactococcus lactis subsp. lactis (Streptococcus lactis).